The following is a 285-amino-acid chain: Urease accessory protein UreD (285 aa).

It belongs to the UreD family. UreD, UreF and UreG form a complex that acts as a GTP-hydrolysis-dependent molecular chaperone, activating the urease apoprotein by helping to assemble the nickel containing metallocenter of UreC. The UreE protein probably delivers the nickel.

The protein resides in the cytoplasm. In terms of biological role, required for maturation of urease via the functional incorporation of the urease nickel metallocenter. The chain is Urease accessory protein UreD from Azoarcus sp. (strain BH72).